A 1496-amino-acid chain; its full sequence is DNA-directed RNA polymerase subunit beta' (1496 aa).

4 residues coordinate Zn(2+): Cys70, Cys72, Cys85, and Cys88. Residues Asp461, Asp463, and Asp465 each coordinate Mg(2+). Zn(2+)-binding residues include Cys908, Cys982, Cys989, and Cys992. The interval 1467–1496 (DKDMQVEGESEVPAIPPVAEGSAPEAPPAE) is disordered.

The protein belongs to the RNA polymerase beta' chain family. In terms of assembly, the RNAP catalytic core consists of 2 alpha, 1 beta, 1 beta' and 1 omega subunit. When a sigma factor is associated with the core the holoenzyme is formed, which can initiate transcription. Mg(2+) is required as a cofactor. It depends on Zn(2+) as a cofactor.

The enzyme catalyses RNA(n) + a ribonucleoside 5'-triphosphate = RNA(n+1) + diphosphate. Its function is as follows. DNA-dependent RNA polymerase catalyzes the transcription of DNA into RNA using the four ribonucleoside triphosphates as substrates. The protein is DNA-directed RNA polymerase subunit beta' of Paramagnetospirillum magneticum (strain ATCC 700264 / AMB-1) (Magnetospirillum magneticum).